The sequence spans 217 residues: Probable transaldolase (217 aa).

K83 serves as the catalytic Schiff-base intermediate with substrate.

It belongs to the transaldolase family. Type 3B subfamily.

It localises to the cytoplasm. The catalysed reaction is D-sedoheptulose 7-phosphate + D-glyceraldehyde 3-phosphate = D-erythrose 4-phosphate + beta-D-fructose 6-phosphate. The protein operates within carbohydrate degradation; pentose phosphate pathway; D-glyceraldehyde 3-phosphate and beta-D-fructose 6-phosphate from D-ribose 5-phosphate and D-xylulose 5-phosphate (non-oxidative stage): step 2/3. In terms of biological role, transaldolase is important for the balance of metabolites in the pentose-phosphate pathway. The chain is Probable transaldolase from Caulobacter sp. (strain K31).